Reading from the N-terminus, the 60-residue chain is DNA-directed RNA polymerase subunit Rpo6 (60 aa).

This sequence belongs to the archaeal Rpo6/eukaryotic RPB6 RNA polymerase subunit family. In terms of assembly, part of the RNA polymerase complex.

It localises to the cytoplasm. The enzyme catalyses RNA(n) + a ribonucleoside 5'-triphosphate = RNA(n+1) + diphosphate. DNA-dependent RNA polymerase (RNAP) catalyzes the transcription of DNA into RNA using the four ribonucleoside triphosphates as substrates. The chain is DNA-directed RNA polymerase subunit Rpo6 from Methanosarcina acetivorans (strain ATCC 35395 / DSM 2834 / JCM 12185 / C2A).